Consider the following 337-residue polypeptide: Tetraacyldisaccharide 4'-kinase (337 aa).

55 to 62 contributes to the ATP binding site; sequence TIGGNGKT.

This sequence belongs to the LpxK family.

It catalyses the reaction a lipid A disaccharide + ATP = a lipid IVA + ADP + H(+). Its pathway is glycolipid biosynthesis; lipid IV(A) biosynthesis; lipid IV(A) from (3R)-3-hydroxytetradecanoyl-[acyl-carrier-protein] and UDP-N-acetyl-alpha-D-glucosamine: step 6/6. Functionally, transfers the gamma-phosphate of ATP to the 4'-position of a tetraacyldisaccharide 1-phosphate intermediate (termed DS-1-P) to form tetraacyldisaccharide 1,4'-bis-phosphate (lipid IVA). This Blochmanniella pennsylvanica (strain BPEN) protein is Tetraacyldisaccharide 4'-kinase.